The following is a 634-amino-acid chain: DNA gyrase subunit B (634 aa).

Residues 416–530 (REIYIVEGDS…NGYIYIAMPP (115 aa)) form the Toprim domain. Glutamate 422, aspartate 495, and aspartate 497 together coordinate Mg(2+).

Belongs to the type II topoisomerase GyrB family. In terms of assembly, heterotetramer, composed of two GyrA and two GyrB chains. In the heterotetramer, GyrA contains the active site tyrosine that forms a transient covalent intermediate with DNA, while GyrB binds cofactors and catalyzes ATP hydrolysis. Mg(2+) serves as cofactor. Mn(2+) is required as a cofactor. The cofactor is Ca(2+).

It localises to the cytoplasm. It catalyses the reaction ATP-dependent breakage, passage and rejoining of double-stranded DNA.. Its function is as follows. A type II topoisomerase that negatively supercoils closed circular double-stranded (ds) DNA in an ATP-dependent manner to modulate DNA topology and maintain chromosomes in an underwound state. Negative supercoiling favors strand separation, and DNA replication, transcription, recombination and repair, all of which involve strand separation. Also able to catalyze the interconversion of other topological isomers of dsDNA rings, including catenanes and knotted rings. Type II topoisomerases break and join 2 DNA strands simultaneously in an ATP-dependent manner. This Borreliella burgdorferi (strain ATCC 35210 / DSM 4680 / CIP 102532 / B31) (Borrelia burgdorferi) protein is DNA gyrase subunit B.